The chain runs to 37 residues: Esculentin-2Ra (37 aa).

A disulfide bridge connects residues C31 and C37.

In terms of tissue distribution, expressed by the skin glands.

It is found in the secreted. Functionally, antimicrobial peptide. This is Esculentin-2Ra from Pelophylax ridibundus (Marsh frog).